Reading from the N-terminus, the 637-residue chain is Anthranilate synthase, phenazine specific (637 aa).

The anthranilate synthase component I stretch occupies residues 1-434 (MSQTAAHLME…QREQIQADFS (434 aa)). Residues 437–628 (QVLIVDAEDT…LRHALIHTPV (192 aa)) enclose the Glutamine amidotransferase type-1 domain. Catalysis depends on for GATase activity residues C517, H602, and E604.

It catalyses the reaction chorismate + L-glutamine = anthranilate + pyruvate + L-glutamate + H(+). It participates in antibiotic biosynthesis; phenazine biosynthesis. Involved in the biosynthesis of the antibiotic, phenazine, a nitrogen-containing heterocyclic molecule having important roles in virulence, competition and biological control. This is Anthranilate synthase, phenazine specific (phzB) from Pseudomonas chlororaphis (Pseudomonas aureofaciens).